The primary structure comprises 80 residues: Cell division protein ZapB (80 aa).

Positions 3–80 form a coiled coil; the sequence is LEILEQLEAK…GLLGKMEEVE (78 aa). A disordered region spans residues 41–62; it reads LEQANNGRSEVEQEAQKARDEQ. Positions 49–62 are enriched in basic and acidic residues; the sequence is SEVEQEAQKARDEQ.

This sequence belongs to the ZapB family. Homodimer. The ends of the coiled-coil dimer bind to each other, forming polymers. Interacts with FtsZ.

The protein localises to the cytoplasm. In terms of biological role, non-essential, abundant cell division factor that is required for proper Z-ring formation. It is recruited early to the divisome by direct interaction with FtsZ, stimulating Z-ring assembly and thereby promoting cell division earlier in the cell cycle. Its recruitment to the Z-ring requires functional FtsA or ZipA. This Aliivibrio salmonicida (strain LFI1238) (Vibrio salmonicida (strain LFI1238)) protein is Cell division protein ZapB.